The primary structure comprises 660 residues: Bifunctional polymyxin resistance protein ArnA (660 aa).

Residues Met1 to Leu304 form a formyltransferase ArnAFT region. His86–Ile88 lines the (6R)-10-formyltetrahydrofolate pocket. The active-site Proton donor; for formyltransferase activity is His104. Residues Arg114 and Val136–Asp140 contribute to the (6R)-10-formyltetrahydrofolate site. Residues Arg314–Ser660 form a dehydrogenase ArnADH region. Residues Asp347 and Asp368–Ile369 each bind NAD(+). Residues Ala393, Tyr398, and Thr432–Ser433 each bind UDP-alpha-D-glucuronate. Glu434 serves as the catalytic Proton acceptor; for decarboxylase activity. Residues Arg460, Asn492, Lys526–Arg535, and Tyr613 contribute to the UDP-alpha-D-glucuronate site. The active-site Proton donor; for decarboxylase activity is the Arg619.

The protein in the N-terminal section; belongs to the Fmt family. UDP-L-Ara4N formyltransferase subfamily. In the C-terminal section; belongs to the NAD(P)-dependent epimerase/dehydratase family. UDP-glucuronic acid decarboxylase subfamily. As to quaternary structure, homohexamer, formed by a dimer of trimers.

The catalysed reaction is UDP-alpha-D-glucuronate + NAD(+) = UDP-beta-L-threo-pentopyranos-4-ulose + CO2 + NADH. The enzyme catalyses UDP-4-amino-4-deoxy-beta-L-arabinose + (6R)-10-formyltetrahydrofolate = UDP-4-deoxy-4-formamido-beta-L-arabinose + (6S)-5,6,7,8-tetrahydrofolate + H(+). The protein operates within nucleotide-sugar biosynthesis; UDP-4-deoxy-4-formamido-beta-L-arabinose biosynthesis; UDP-4-deoxy-4-formamido-beta-L-arabinose from UDP-alpha-D-glucuronate: step 1/3. It functions in the pathway nucleotide-sugar biosynthesis; UDP-4-deoxy-4-formamido-beta-L-arabinose biosynthesis; UDP-4-deoxy-4-formamido-beta-L-arabinose from UDP-alpha-D-glucuronate: step 3/3. It participates in bacterial outer membrane biogenesis; lipopolysaccharide biosynthesis. Bifunctional enzyme that catalyzes the oxidative decarboxylation of UDP-glucuronic acid (UDP-GlcUA) to UDP-4-keto-arabinose (UDP-Ara4O) and the addition of a formyl group to UDP-4-amino-4-deoxy-L-arabinose (UDP-L-Ara4N) to form UDP-L-4-formamido-arabinose (UDP-L-Ara4FN). The modified arabinose is attached to lipid A and is required for resistance to polymyxin and cationic antimicrobial peptides. This is Bifunctional polymyxin resistance protein ArnA from Escherichia coli O81 (strain ED1a).